Consider the following 153-residue polypeptide: MYSDKVFDHFQNPRNVGKIEDADGVGTVGNPVCGDLMTIYIKVKDNRIEDIKFQTFGCAAAIATSSMATEMAKGKTIEEALKITRDAVAEALGGLPKQKMHCSNLAADALRRAIVDYFRKNGKIDKIKELGLEKELEKMEKGEMDDHGEYCEA.

[2Fe-2S] cluster is bound by residues Cys-33, Cys-58, His-101, and Cys-102.

It belongs to the NifU family. As to quaternary structure, forms a heterotetramer with IscS2.

Functionally, a scaffold on which IscS assembles Fe-S clusters. Subsequently gives the nascent cluster to other proteins. It is likely that Fe-S cluster coordination is flexible as the role of this complex is to build and then hand off Fe-S clusters. This chain is Iron-sulfur cluster assembly scaffold protein IscU 1 (iscU1), found in Archaeoglobus fulgidus (strain ATCC 49558 / DSM 4304 / JCM 9628 / NBRC 100126 / VC-16).